The following is a 264-amino-acid chain: Protein Saci_1508 (264 aa).

This sequence belongs to the CinA family.

The chain is Protein Saci_1508 from Sulfolobus acidocaldarius (strain ATCC 33909 / DSM 639 / JCM 8929 / NBRC 15157 / NCIMB 11770).